The following is a 363-amino-acid chain: 3-isopropylmalate dehydrogenase (363 aa).

78–91 (GPKWEHLPPDQQPE) is an NAD(+) binding site. Residues R99, R109, R138, and D227 each coordinate substrate. Mg(2+) contacts are provided by D227, D251, and D255. Residue 285–297 (GSAPDIAGKNIAN) participates in NAD(+) binding.

The protein belongs to the isocitrate and isopropylmalate dehydrogenases family. LeuB type 1 subfamily. In terms of assembly, homodimer. It depends on Mg(2+) as a cofactor. Mn(2+) is required as a cofactor.

Its subcellular location is the cytoplasm. The enzyme catalyses (2R,3S)-3-isopropylmalate + NAD(+) = 4-methyl-2-oxopentanoate + CO2 + NADH. The protein operates within amino-acid biosynthesis; L-leucine biosynthesis; L-leucine from 3-methyl-2-oxobutanoate: step 3/4. With respect to regulation, requires K(+) ions for optimum activity. Functionally, catalyzes the oxidation of 3-carboxy-2-hydroxy-4-methylpentanoate (3-isopropylmalate) to 3-carboxy-4-methyl-2-oxopentanoate. The product decarboxylates to 4-methyl-2 oxopentanoate. The protein is 3-isopropylmalate dehydrogenase of Escherichia coli (strain K12).